The following is a 426-amino-acid chain: Serine--tRNA ligase (426 aa).

Positions 36–66 (KRKHLQERTQDLQSQRNTISKEIGQKKAKGE) are disordered. Residues 46 to 55 (DLQSQRNTIS) show a composition bias toward polar residues. 233–235 (TAE) serves as a coordination point for L-serine. Residue 264–266 (RSE) coordinates ATP. L-serine is bound at residue Glu-287. 351–354 (EISS) contacts ATP. Ser-387 contributes to the L-serine binding site.

It belongs to the class-II aminoacyl-tRNA synthetase family. Type-1 seryl-tRNA synthetase subfamily. As to quaternary structure, homodimer. The tRNA molecule binds across the dimer.

The protein localises to the cytoplasm. The enzyme catalyses tRNA(Ser) + L-serine + ATP = L-seryl-tRNA(Ser) + AMP + diphosphate + H(+). It catalyses the reaction tRNA(Sec) + L-serine + ATP = L-seryl-tRNA(Sec) + AMP + diphosphate + H(+). Its pathway is aminoacyl-tRNA biosynthesis; selenocysteinyl-tRNA(Sec) biosynthesis; L-seryl-tRNA(Sec) from L-serine and tRNA(Sec): step 1/1. Catalyzes the attachment of serine to tRNA(Ser). Is also able to aminoacylate tRNA(Sec) with serine, to form the misacylated tRNA L-seryl-tRNA(Sec), which will be further converted into selenocysteinyl-tRNA(Sec). The chain is Serine--tRNA ligase from Francisella tularensis subsp. holarctica (strain FTNF002-00 / FTA).